The sequence spans 569 residues: Urease subunit alpha (569 aa).

Residues histidine 136, histidine 138, and lysine 219 each coordinate Ni(2+). At lysine 219 the chain carries N6-carboxylysine. Histidine 221 serves as a coordination point for substrate. Positions 248 and 274 each coordinate Ni(2+). The active-site Proton donor is histidine 322. A Ni(2+)-binding site is contributed by aspartate 362.

Belongs to the metallo-dependent hydrolases superfamily. Urease alpha subunit family. As to quaternary structure, heterotrimer of UreA (gamma), UreB (beta) and UreC (alpha) subunits. Three heterotrimers associate to form the active enzyme. Ni cation is required as a cofactor. Post-translationally, carboxylation allows a single lysine to coordinate two nickel ions.

Its subcellular location is the cytoplasm. The enzyme catalyses urea + 2 H2O + H(+) = hydrogencarbonate + 2 NH4(+). It functions in the pathway nitrogen metabolism; urea degradation; CO(2) and NH(3) from urea (urease route): step 1/1. This is Urease subunit alpha from Microcystis aeruginosa (strain NIES-843 / IAM M-2473).